Consider the following 236-residue polypeptide: 7-cyano-7-deazaguanine synthase (236 aa).

7–17 (CSGGLDSVSLA) contributes to the ATP binding site. Zn(2+)-binding residues include cysteine 185, cysteine 193, cysteine 196, and cysteine 199.

This sequence belongs to the QueC family. Zn(2+) serves as cofactor.

The enzyme catalyses 7-carboxy-7-deazaguanine + NH4(+) + ATP = 7-cyano-7-deazaguanine + ADP + phosphate + H2O + H(+). Its pathway is purine metabolism; 7-cyano-7-deazaguanine biosynthesis. Its function is as follows. Catalyzes the ATP-dependent conversion of 7-carboxy-7-deazaguanine (CDG) to 7-cyano-7-deazaguanine (preQ(0)). The polypeptide is 7-cyano-7-deazaguanine synthase (Rhizobium rhizogenes (strain K84 / ATCC BAA-868) (Agrobacterium radiobacter)).